Here is a 455-residue protein sequence, read N- to C-terminus: Nuclear receptor subfamily 6 group A member 1-B (455 aa).

Residues 38-113 constitute a DNA-binding region (nuclear receptor); the sequence is ERWCLICGDR…MGMNRKAIRE (76 aa). NR C4-type zinc fingers lie at residues 41-61 and 77-96; these read CLIC…CEGC and CNRD…CQYC. Residues 145 to 173 form a disordered region; that stretch reads EGSDLSDSWSHGYSNHSSPGNSLSEGGQS. The segment covering 149–165 has biased composition (polar residues); sequence LSDSWSHGYSNHSSPGN. An NR LBD domain is found at 215–446; that stretch reads QTHTLTGQIL…YSCTTNQNPW (232 aa).

This sequence belongs to the nuclear hormone receptor family. NR6 subfamily. Homodimer.

Its subcellular location is the nucleus. Its function is as follows. Probable orphan nuclear receptor. Binds to a response element containing repeats of the motif 5'-AGGTCA-3'. The polypeptide is Nuclear receptor subfamily 6 group A member 1-B (Danio rerio (Zebrafish)).